Reading from the N-terminus, the 108-residue chain is uncharacterized protein (108 aa).

A glycan (N-linked (GlcNAc...) asparagine) is linked at asparagine 33.

In terms of processing, N-glycosylated.

This is an uncharacterized protein from Saccharomyces cerevisiae (strain ATCC 204508 / S288c) (Baker's yeast).